The sequence spans 437 residues: Transmembrane protein with metallophosphoesterase domain (437 aa).

A run of 5 helical transmembrane segments spans residues 7–27 (LSAE…MLIS), 41–61 (ALLF…LGSL), 87–107 (IIVL…FFLV), 116–136 (LLSF…FVFG), and 164–184 (VLAL…AAQP). Asp211, His213, Asp243, Asn274, His376, and His378 together coordinate a divalent metal cation.

It belongs to the metallophosphoesterase superfamily. LOC643853 family. A divalent metal cation serves as cofactor.

It is found in the membrane. In Danio rerio (Zebrafish), this protein is Transmembrane protein with metallophosphoesterase domain (tmppe).